The sequence spans 291 residues: Small ribosomal subunit protein uS2 (291 aa).

The segment at 255 to 291 is disordered; sequence AGAATGEWSEAQGAQWETGTGAPAADWAAEPAKESSW.

Belongs to the universal ribosomal protein uS2 family. As to quaternary structure, component of the small ribosomal subunit. Mature ribosomes consist of a small (40S) and a large (60S) subunit. The 40S subunit contains about 33 different proteins and 1 molecule of RNA (18S). The 60S subunit contains about 49 different proteins and 3 molecules of RNA (25S, 5.8S and 5S). Interacts with RPS21.

It is found in the cytoplasm. In terms of biological role, required for the assembly and/or stability of the 40S ribosomal subunit. Required for the processing of the 20S rRNA-precursor to mature 18S rRNA in a late step of the maturation of 40S ribosomal subunits. This Podospora anserina (strain S / ATCC MYA-4624 / DSM 980 / FGSC 10383) (Pleurage anserina) protein is Small ribosomal subunit protein uS2.